We begin with the raw amino-acid sequence, 174 residues long: Probable calcium-binding protein CML20 (174 aa).

Glycine 2 carries N-myristoyl glycine lipidation. The interval 14-35 (LRRSRSRSPPPAVLDPSQSPLS) is disordered. 4 consecutive EF-hand domains span residues 39 to 74 (EAEPELIRVFRCFDTDGDGLISAAEMREFYGCSVDE), 75 to 100 (AEEMVAAADRDGDGFVSIEELRAVME), 102 to 137 (GGLDALRAAFDEYDEDGNGVITAEELRRALRRLNLD), and 141 to 174 (LTAEQCAEIVAAVDSDGDGVISFDEFKAMMSKQA). Ca(2+)-binding residues include aspartate 52, aspartate 54, aspartate 56, glutamate 63, aspartate 83, aspartate 85, aspartate 87, glutamate 94, aspartate 115, aspartate 117, asparagine 119, glutamate 126, aspartate 154, aspartate 156, aspartate 158, and glutamate 165.

Its function is as follows. Potential calcium sensor. The sequence is that of Probable calcium-binding protein CML20 (CML20) from Oryza sativa subsp. japonica (Rice).